We begin with the raw amino-acid sequence, 376 residues long: ATP synthase gamma chain, chloroplastic (376 aa).

The N-terminal 52 residues, 1–52 (MSCSNVTMLVSSKPSLPDASNLSFRSAFNPFQLPSQNSSSSCTPSRPTSIQC), are a transit peptide targeting the chloroplast. Cysteine 133 is a catalytic residue. A disulfide bridge connects residues cysteine 250 and cysteine 256.

Belongs to the ATPase gamma chain family. As to quaternary structure, F-type ATPases have 2 components, CF(1) - the catalytic core - and CF(0) - the membrane proton channel. CF(1) has five subunits: alpha(3), beta(3), gamma(1), delta(1), epsilon(1). CF(0) has four main subunits: a, b, b' and c.

It localises to the plastid. Its subcellular location is the chloroplast thylakoid membrane. Its function is as follows. Produces ATP from ADP in the presence of a proton gradient across the membrane. The gamma chain is believed to be important in regulating ATPase activity and the flow of protons through the CF(0) complex. The chain is ATP synthase gamma chain, chloroplastic (ATPC) from Pisum sativum (Garden pea).